A 573-amino-acid chain; its full sequence is DEAD-box ATP-dependent RNA helicase 47A (573 aa).

Positions 131-159 match the Q motif motif; the sequence is KSFEELGLPPLLIDRLNKEGLTAPTEVQS. Residues 162–362 enclose the Helicase ATP-binding domain; sequence IPIISQKHDA…RSWGHDPVLV (201 aa). 175–182 serves as a coordination point for ATP; the sequence is SYTGSGKT. Residues 293 to 296 carry the DEAD box motif; it reads DEVD. The Helicase C-terminal domain maps to 421–565; the sequence is TLRRCIHALE…PCEFTEGKLL (145 aa).

It belongs to the DEAD box helicase family.

It carries out the reaction ATP + H2O = ADP + phosphate + H(+). This chain is DEAD-box ATP-dependent RNA helicase 47A, found in Oryza sativa subsp. japonica (Rice).